A 418-amino-acid chain; its full sequence is Diacylglycerol O-acyltransferase 1 (418 aa).

The segment at 1-30 (MSGTFNDIRRRKKEEGSPTAGITERHENKS) is disordered. The Cytoplasmic portion of the chain corresponds to 1–71 (MSGTFNDIRR…LAVAWHTSSF (71 aa)). Ser-17 bears the Phosphoserine mark. A helical membrane pass occupies residues 72 to 92 (VLFSIFTLFAISTPALWVLAI). Over 93 to 186 (PYMIYFFFDR…DYRNQECTGP (94 aa)) the chain is Lumenal. Asn-173 is a glycosylation site (N-linked (GlcNAc...) asparagine). A helical transmembrane segment spans residues 187–207 (TYLFGYHPHGIGALGAFGAFA). Residues 208 to 215 (TEGCNYSK) lie on the Cytoplasmic side of the membrane. The chain crosses the membrane as a helical span at residues 216 to 236 (IFPGIPISLMTLVTQFHIPLY). Residues 237-289 (RDYLLALGISSVSRKNALRTLSKNQSICIVVGGARESLLSSTNGTQLILNKRK) are Lumenal-facing. Asn-260 and Asn-279 each carry an N-linked (GlcNAc...) asparagine glycan. The chain crosses the membrane as a helical span at residues 290-310 (GFIKLAIQTGNINLVPVFAFG). The Cytoplasmic segment spans residues 311–418 (EVDCYNVLST…VPDAELKIVG (108 aa)).

It belongs to the diacylglycerol acyltransferase family.

Its subcellular location is the lipid droplet. The protein resides in the endoplasmic reticulum membrane. It catalyses the reaction an acyl-CoA + a 1,2-diacyl-sn-glycerol = a triacyl-sn-glycerol + CoA. It carries out the reaction a 2-acylglycerol + an acyl-CoA = a 1,2-diacylglycerol + CoA. The enzyme catalyses 2-(9Z-octadecenoyl)-glycerol + (9Z)-octadecenoyl-CoA = 1,2-di-(9Z-octadecenoyl)-glycerol + CoA. The protein operates within glycerolipid metabolism; triacylglycerol biosynthesis. Its function is as follows. Catalyzes the terminal and only committed step in triacylglycerol (TAG) synthesis by using diacylglycerol (DAG) and fatty acyl-CoA as substrates. Required for storage lipid synthesis. Major DAG esterifying enzyme in stationary phase when TAG production is particularly active. Involved in lipid particle synthesis from the endoplasmic reticulum, promoting localized TAG production at discrete ER subdomains, and in ergosterol biosynthesis. Also has monoacylglycerol acyltransferase (MGAT) activity, catalyzing the acyl-CoA-dependent esterification of monoacylglycerol to diacylglycerol. Can also utilize ceramide instead of DAG, acylating the ceramides by attaching a fatty acid to the hydroxy group on the first carbon atom of the long-chain base to produce 1-O-acylceramides. The chain is Diacylglycerol O-acyltransferase 1 (DGA1) from Saccharomyces cerevisiae (strain ATCC 204508 / S288c) (Baker's yeast).